Here is a 301-residue protein sequence, read N- to C-terminus: Pyridoxal 5'-phosphate synthase subunit Pdx1 (301 aa).

Asp26 contributes to the D-ribose 5-phosphate binding site. Lys83 (schiff-base intermediate with D-ribose 5-phosphate) is an active-site residue. Gly155 is a D-ribose 5-phosphate binding site. Arg167 serves as a coordination point for D-glyceraldehyde 3-phosphate. Residues Gly216 and 237 to 238 (GS) each bind D-ribose 5-phosphate.

This sequence belongs to the PdxS/SNZ family. In terms of assembly, homohexamer and homododecamer. In the presence of Pdx2, forms a dodecamer of heterodimers.

Its subcellular location is the cytoplasm. The enzyme catalyses aldehydo-D-ribose 5-phosphate + D-glyceraldehyde 3-phosphate + L-glutamine = pyridoxal 5'-phosphate + L-glutamate + phosphate + 3 H2O + H(+). It functions in the pathway cofactor biosynthesis; pyridoxal 5'-phosphate biosynthesis. Functionally, catalyzes the formation of pyridoxal 5'-phosphate from ribose 5-phosphate (RBP), glyceraldehyde 3-phosphate (G3P) and ammonia. The ammonia is provided by Pdx2. Can also use ribulose 5-phosphate and dihydroxyacetone phosphate as substrates, resulting from enzyme-catalyzed isomerization of RBP and G3P, respectively. The protein is Pyridoxal 5'-phosphate synthase subunit Pdx1 (pdx1) of Plasmodium falciparum (isolate 3D7).